A 286-amino-acid chain; its full sequence is 33 kDa chaperonin (286 aa).

Cystine bridges form between Cys-233–Cys-235 and Cys-267–Cys-270.

The protein belongs to the HSP33 family. In terms of processing, under oxidizing conditions two disulfide bonds are formed involving the reactive cysteines. Under reducing conditions zinc is bound to the reactive cysteines and the protein is inactive.

It is found in the cytoplasm. Its function is as follows. Redox regulated molecular chaperone. Protects both thermally unfolding and oxidatively damaged proteins from irreversible aggregation. Plays an important role in the bacterial defense system toward oxidative stress. The polypeptide is 33 kDa chaperonin (Histophilus somni (strain 129Pt) (Haemophilus somnus)).